The chain runs to 192 residues: EF-hand protein 5 (192 aa).

Residues 1-36 (MKDKAPVSSQQDHFSRGGAVGGKPISDVRGTSRPFY) are disordered. EF-hand domains are found at residues 46–80 (AELA…GLHL), 81–118 (SDEE…EVDD), 119–154 (TMLE…GGEC), and 155–190 (STPE…HRLN). Ca(2+)-binding residues include Thr100, Glu102, Asp107, Asp132, and Thr136.

The sequence is that of EF-hand protein 5 from Trypanosoma brucei brucei.